The chain runs to 208 residues: MAKYNDAKCRLCRREGTKLFLKGDRCFTDKCAYDRRPYAPGQHGRVRKKMSDYAIQLREKQKVRRVYGVLEKQFREYFVHADMAKGITGVNLLSYLERRLDNVVYRLGLANSRVQARQLIRHGIFTLNGHKVTIPSLQVNVGDSIEVPEKNRKISVVADAQSIVGRRGCPSWLELDASTFKGVVKALPQREDIQFPINEHLIVELYSK.

Residues 98–158 (RRLDNVVYRL…EKNRKISVVA (61 aa)) form the S4 RNA-binding domain.

This sequence belongs to the universal ribosomal protein uS4 family. As to quaternary structure, part of the 30S ribosomal subunit. Contacts protein S5. The interaction surface between S4 and S5 is involved in control of translational fidelity.

Its function is as follows. One of the primary rRNA binding proteins, it binds directly to 16S rRNA where it nucleates assembly of the body of the 30S subunit. In terms of biological role, with S5 and S12 plays an important role in translational accuracy. The sequence is that of Small ribosomal subunit protein uS4 from Lawsonia intracellularis (strain PHE/MN1-00).